A 536-amino-acid polypeptide reads, in one-letter code: Testis-specific expressed protein 55 (536 aa).

A compositionally biased stretch (low complexity) spans 1-11 (MEEPPQEALAE). 2 disordered regions span residues 1–287 (MEEP…PGTS) and 328–348 (SNAD…QTDH). Positions 35 to 52 (QKNQAERKADNHTAHRIA) are enriched in basic and acidic residues. Composition is skewed to polar residues over residues 62–85 (QAES…STPG) and 105–136 (QVNQ…QVSG). Composition is skewed to basic and acidic residues over residues 138 to 158 (TEER…ERRT) and 173 to 222 (RGSR…ERRP). Low complexity predominate over residues 226 to 242 (IDSGSSVPSDQSPSVQI). Positions 243 to 255 (DSGSSVPSDQRPS) are enriched in polar residues. Residues 339–348 (HYTESDQTDH) are compositionally biased toward basic and acidic residues.

As to expression, testis-specific.

Its subcellular location is the nucleus. It localises to the cell projection. The protein resides in the cilium. The protein localises to the flagellum. This chain is Testis-specific expressed protein 55, found in Homo sapiens (Human).